A 342-amino-acid chain; its full sequence is uncharacterized protein (342 aa).

The 171-residue stretch at 3–173 (IAIRGGHNFL…LIGYLIAKGI (171 aa)) folds into the MurNAc-LAA domain.

It to C.perfringens CPE1502.

This is an uncharacterized protein from Clostridium perfringens.